Reading from the N-terminus, the 486-residue chain is Cysteine--tRNA ligase (486 aa).

Cysteine 30 provides a ligand contact to Zn(2+). The 'HIGH' region signature appears at 32 to 42 (PTVYDRAHLGN). Zn(2+) is bound by residues cysteine 221, histidine 246, and glutamate 250. A 'KMSKS' region motif is present at residues 279 to 283 (KMSKS). Position 282 (lysine 282) interacts with ATP.

Belongs to the class-I aminoacyl-tRNA synthetase family. In terms of assembly, monomer. Requires Zn(2+) as cofactor.

The protein resides in the cytoplasm. The catalysed reaction is tRNA(Cys) + L-cysteine + ATP = L-cysteinyl-tRNA(Cys) + AMP + diphosphate. This chain is Cysteine--tRNA ligase, found in Cereibacter sphaeroides (strain ATCC 17025 / ATH 2.4.3) (Rhodobacter sphaeroides).